The sequence spans 271 residues: Ribosomal RNA small subunit methyltransferase A (271 aa).

Positions 11, 13, 38, 58, 86, and 101 each coordinate S-adenosyl-L-methionine.

This sequence belongs to the class I-like SAM-binding methyltransferase superfamily. rRNA adenine N(6)-methyltransferase family. RsmA subfamily.

Its subcellular location is the cytoplasm. It carries out the reaction adenosine(1518)/adenosine(1519) in 16S rRNA + 4 S-adenosyl-L-methionine = N(6)-dimethyladenosine(1518)/N(6)-dimethyladenosine(1519) in 16S rRNA + 4 S-adenosyl-L-homocysteine + 4 H(+). In terms of biological role, specifically dimethylates two adjacent adenosines (A1518 and A1519) in the loop of a conserved hairpin near the 3'-end of 16S rRNA in the 30S particle. May play a critical role in biogenesis of 30S subunits. This Helicobacter pylori (strain HPAG1) protein is Ribosomal RNA small subunit methyltransferase A.